We begin with the raw amino-acid sequence, 326 residues long: Meso-diaminopimelate D-dehydrogenase (326 aa).

Residues 11-14 (YGNL), 35-37 (TRR), 69-72 (CGGS), 92-94 (SFD), and 121-125 (VGWDP) contribute to the NADP(+) site. Residues D94, D124, W148, 154 to 155 (QG), T173, R199, H249, and N276 each bind substrate.

The protein belongs to the diaminopimelate dehydrogenase family. Homodimer.

The catalysed reaction is meso-2,6-diaminopimelate + NADP(+) + H2O = (S)-2-amino-6-oxoheptanedioate + NH4(+) + NADPH + H(+). It participates in amino-acid biosynthesis; L-lysine biosynthesis via DAP pathway; DL-2,6-diaminopimelate from (S)-tetrahydrodipicolinate: step 1/1. L,L-2,6-diaminopimelate, D,D-2,6-diaminopimelate and meso-2,5-diaminoadipate competitively inhibit the oxidation of meso-2,6-diaminopimelate. L-2-amino-6-methylene-pimelate is also a potent competitive inhibitor (5 uM) of this reaction. Glyoxylate inhibits the reductive amination of L-2-amino-6-oxopimelate about 30%. The enzyme is inhibited completely by p-chloromercuribenzoate and HgCl(2) in vitro. Functionally, catalyzes the reversible NADPH-dependent reductive amination of L-2-amino-6-oxopimelate, the acyclic form of L-tetrahydrodipicolinate, to generate the meso compound, D,L-2,6-diaminopimelate. Probably plays a role in lysine biosynthesis. Exhibits a high substrate specificity, since alpha-ketoglutarate, pyruvate, oxaloacetate, glyoxylate, alpha-ketobutyrate, alpha-ketovalerate, alpha-ketocaproate, alpha-ketoisocaproate, alpha-ketoisovalerate, and phenylpyruvate are not substrates for the reductive amination reaction, and L,L-2,6-diaminopimelate, D,D-2,6-diaminopimelate, DL-alpha-aminopimelate, meso- and DL-2,5-diaminoadipate, L-djenkolate, L-cystine, L-lysine, S-(beta-aminoethy1)-L-homocysteine, L-ornithine, L-arginine, L-alpha,gamma-diaminobutyrate, L-histidine, L-phenylalanine, L-tyrosine, L-glutamate, L-aspartate, L-leucine, L-valine, L-methionine, L-serine, L-alanine, L-alpha-aminobutyrate, D-lysine, D-glutamate, D-leucine, D-alanine, D-phenylalanine, epsilon-aminocaproate, 7-aminoheptanoate, and 8-aminooctanoate are not substrates for the oxidative deamination reaction. Cannot use NAD(+) or NAD(+) analogs instead of NADP(+) for the oxidative deamination reaction. This chain is Meso-diaminopimelate D-dehydrogenase (dapdh), found in Lysinibacillus sphaericus (Bacillus sphaericus).